The sequence spans 264 residues: Triosephosphate isomerase (264 aa).

13–15 (NWK) contributes to the substrate binding site. Histidine 106 (electrophile) is an active-site residue. The Proton acceptor role is filled by glutamate 179. Residues glycine 185, serine 223, and 244–245 (GG) each bind substrate.

The protein belongs to the triosephosphate isomerase family. As to quaternary structure, homodimer.

The protein localises to the cytoplasm. The catalysed reaction is D-glyceraldehyde 3-phosphate = dihydroxyacetone phosphate. It participates in carbohydrate biosynthesis; gluconeogenesis. Its pathway is carbohydrate degradation; glycolysis; D-glyceraldehyde 3-phosphate from glycerone phosphate: step 1/1. In terms of biological role, involved in the gluconeogenesis. Catalyzes stereospecifically the conversion of dihydroxyacetone phosphate (DHAP) to D-glyceraldehyde-3-phosphate (G3P). This chain is Triosephosphate isomerase, found in Acinetobacter baumannii (strain AB0057).